The following is a 609-amino-acid chain: Alpha-fetoprotein (609 aa).

Residues Met1–Ser18 form the signal peptide. 3 Albumin domains span residues Arg19 to Thr210, Lys211 to Gln402, and Lys403 to Ser601. His22 contributes to the Cu(2+) binding site. N-linked (GlcNAc...) asparagine glycosylation is present at Asn42. 8 cysteine pairs are disulfide-bonded: Cys99-Cys114, Cys113-Cys124, Cys148-Cys193, Cys192-Cys201, Cys224-Cys270, Cys269-Cys277, Cys289-Cys303, and Cys302-Cys313. Phosphoserine occurs at positions 111, 115, and 117. Asn251 carries an N-linked (GlcNAc...) asparagine glycan. Ser344 carries the phosphoserine modification. 7 disulfide bridges follow: Cys384/Cys393, Cys416/Cys462, Cys461/Cys472, Cys485/Cys501, Cys500/Cys511, Cys538/Cys583, and Cys582/Cys591. The residue at position 444 (Ser444) is a Phosphoserine.

It belongs to the ALB/AFP/VDB family. Dimeric and trimeric forms have been found in addition to the monomeric form. In terms of tissue distribution, plasma. Synthesized by the fetal liver and yolk sac.

Its subcellular location is the secreted. Binds copper, nickel, and fatty acids as well as, and bilirubin less well than, serum albumin. The chain is Alpha-fetoprotein (AFP) from Pan troglodytes (Chimpanzee).